We begin with the raw amino-acid sequence, 239 residues long: uncharacterized protein (239 aa).

This is an uncharacterized protein from Saccharomyces cerevisiae (strain ATCC 204508 / S288c) (Baker's yeast).